A 433-amino-acid polypeptide reads, in one-letter code: Enolase (433 aa).

Glutamine 167 provides a ligand contact to (2R)-2-phosphoglycerate. Glutamate 209 functions as the Proton donor in the catalytic mechanism. The Mg(2+) site is built by aspartate 246, glutamate 291, and aspartate 318. 4 residues coordinate (2R)-2-phosphoglycerate: lysine 343, arginine 372, serine 373, and lysine 394. Catalysis depends on lysine 343, which acts as the Proton acceptor.

It belongs to the enolase family. Component of the RNA degradosome, a multiprotein complex involved in RNA processing and mRNA degradation. Requires Mg(2+) as cofactor.

It localises to the cytoplasm. The protein resides in the secreted. The protein localises to the cell surface. It carries out the reaction (2R)-2-phosphoglycerate = phosphoenolpyruvate + H2O. It functions in the pathway carbohydrate degradation; glycolysis; pyruvate from D-glyceraldehyde 3-phosphate: step 4/5. Catalyzes the reversible conversion of 2-phosphoglycerate (2-PG) into phosphoenolpyruvate (PEP). It is essential for the degradation of carbohydrates via glycolysis. This chain is Enolase, found in Edwardsiella ictaluri (strain 93-146).